The primary structure comprises 517 residues: FAD-dependent monooxygenase FUP4 (517 aa).

Residues 1 to 19 (MRQSSTLTWTSVLLAPLAA) form the signal peptide. The region spanning 75 to 246 (QALRPACLVH…TRFDLDLYDQ (172 aa)) is the FAD-binding PCMH-type domain. Residue His-112 is modified to Pros-8alpha-FAD histidine. N-linked (GlcNAc...) asparagine glycosylation is found at Asn-163, Asn-208, and Asn-346.

This sequence belongs to the oxygen-dependent FAD-linked oxidoreductase family. It depends on FAD as a cofactor.

Its pathway is secondary metabolite biosynthesis; terpenoid biosynthesis. Its function is as follows. FAD-dependent monooxygenase; part of the gene cluster that mediates the biosynthesis of the mycotoxin fusaproliferin (FUP) that belongs to the class of bicyclic sesterterpenoids. FUP4 catalyzes the oxidation of the hydroxy group at the C-16 position of preterpestacin III to a keto group, leading to the formation of (-)-terpestacin. The product of FUP1, preterpestacin I, might also serve as a substrate of FUP4 to yield oxo-preterpestacin I. The FUP biosynthetic pathway starts with the enzyme encoded by FUP1 that combines a C-terminal prenyltransferase domain responsible for the synthesis of geranylgeranyl diphosphate with the N-terminal terpene cyclase domain, to yield preterpestacin I. Preterpestacin I is then decorated by oxygenation steps that are catalyzed by two cytochrome P450 monooxygenases. First, FUP2 introduces a hydroxyl group at the C-24 position resulting in the formation of preterpestacin IIa. The second P450 monooxygenase catalyzes the hydroxylation at C-16 and C-17 of preterpestacin IIa, producing preterpestacin III. Subsequently, the FAD-dependent oxidoreductase FUP4 catalyzes the oxidation of the hydroxy group at the C-16 position to a keto group, leading to the formation of (-)-terpestacin, which is the immediate precursor of FUP. The final step in the proposed biosynthetic pathway is the addition of an acetyl group at the C-24 position of terpestacin, which is catalyzed by the acetyltransferase FUP5. The sequence is that of FAD-dependent monooxygenase FUP4 from Fusarium proliferatum (strain ET1) (Orchid endophyte fungus).